The primary structure comprises 113 residues: Hydrogenase maturation factor HybF (113 aa).

Ni(2+)-binding residues include histidine 2 and glutamate 3. Residues cysteine 73, cysteine 76, cysteine 89, and cysteine 92 each contribute to the Zn(2+) site.

The protein belongs to the HypA/HybF family. HybF subfamily.

In terms of biological role, involved in the maturation of [NiFe] hydrogenases. Required for nickel insertion into the metal center of the hydrogenase. The sequence is that of Hydrogenase maturation factor HybF from Escherichia coli O157:H7.